The primary structure comprises 75 residues: Small ribosomal subunit protein bS18 (75 aa).

This sequence belongs to the bacterial ribosomal protein bS18 family. Part of the 30S ribosomal subunit. Forms a tight heterodimer with protein bS6.

Binds as a heterodimer with protein bS6 to the central domain of the 16S rRNA, where it helps stabilize the platform of the 30S subunit. The sequence is that of Small ribosomal subunit protein bS18 from Moorella thermoacetica (strain ATCC 39073 / JCM 9320).